A 170-amino-acid polypeptide reads, in one-letter code: Photosystem II extrinsic protein V (170 aa).

The signal sequence occupies residues 1–33 (MASVFSSLRRSLKGLLVLIPVLIGLAVTSPAQA). C70, C73, H74, and H125 together coordinate heme c.

It belongs to the cytochrome c family. PsbV subfamily. PSII is composed of 1 copy each of membrane proteins PsbA, PsbB, PsbC, PsbD, PsbE, PsbF, PsbH, PsbI, PsbJ, PsbK, PsbL, PsbM, PsbT, PsbX, PsbY, PsbZ, Psb30/Ycf12, peripheral proteins PsbO, CyanoQ (PsbQ), PsbU, PsbV and a large number of cofactors. It forms dimeric complexes. Requires heme c as cofactor.

It localises to the cellular thylakoid membrane. One of the extrinsic, lumenal subunits of photosystem II (PSII). PSII is a light-driven water plastoquinone oxidoreductase, using light energy to abstract electrons from H(2)O, generating a proton gradient subsequently used for ATP formation. The extrinsic proteins stabilize the structure of photosystem II oxygen-evolving complex (OEC), the ion environment of oxygen evolution and protect the OEC against heat-induced inactivation. Low-potential cytochrome c that plays a role in the OEC of PSII. The protein is Photosystem II extrinsic protein V of Synechococcus sp. (strain CC9605).